Consider the following 121-residue polypeptide: Small ribosomal subunit protein uS13 (121 aa).

Residues 90–121 (RHRRGLPVRGQHTKNNARTRKGKKVSIAGRKK) form a disordered region.

It belongs to the universal ribosomal protein uS13 family. As to quaternary structure, part of the 30S ribosomal subunit. Forms a loose heterodimer with protein S19. Forms two bridges to the 50S subunit in the 70S ribosome.

Its function is as follows. Located at the top of the head of the 30S subunit, it contacts several helices of the 16S rRNA. In the 70S ribosome it contacts the 23S rRNA (bridge B1a) and protein L5 of the 50S subunit (bridge B1b), connecting the 2 subunits; these bridges are implicated in subunit movement. Contacts the tRNAs in the A and P-sites. In Lactiplantibacillus plantarum (strain ATCC BAA-793 / NCIMB 8826 / WCFS1) (Lactobacillus plantarum), this protein is Small ribosomal subunit protein uS13.